We begin with the raw amino-acid sequence, 103 residues long: Putative truncated guanine nucleotide exchange factor YLL017W (103 aa).

The SH3 domain occupies 26 to 97 (QPIDVVECTY…PPSFYTVHSK (72 aa)).

This chain is Putative truncated guanine nucleotide exchange factor YLL017W, found in Saccharomyces cerevisiae (strain ATCC 204508 / S288c) (Baker's yeast).